A 225-amino-acid chain; its full sequence is Membrin-11 (225 aa).

A2 carries the post-translational modification N-acetylalanine. Topologically, residues 2–200 are cytoplasmic; it reads ASGIVEGGGS…VLRLIERRNR (199 aa). A helical; Anchor for type IV membrane protein membrane pass occupies residues 201-221; that stretch reads VDTWIKYAGMIATLVILYLFI. The Vesicular portion of the chain corresponds to 222 to 225; sequence RWTR.

Belongs to the GOSR2 family.

It localises to the golgi apparatus membrane. Involved in transport of proteins from the cis/medial-Golgi to the trans-Golgi network. This Arabidopsis thaliana (Mouse-ear cress) protein is Membrin-11 (MEMB11).